The sequence spans 906 residues: Cadherin-2 (906 aa).

The N-terminal stretch at 1–25 is a signal peptide; it reads MCRIAGGPRTLLPLLAALLQASLEA. A propeptide spanning residues 26 to 159 is cleaved from the precursor; sequence SGELALCKTG…HSGALQRQKR (134 aa). A Phosphoserine modification is found at serine 96. 5 Cadherin domains span residues 160–267, 268–382, 383–497, 498–603, and 604–717; these read DWVI…RPEF, LHQV…PPEF, TAMT…NPYF, APNP…DNAP, and QVLP…RIVG. Over 160-724 the chain is Extracellular; the sequence is DWVIPPINLP…IVGAGLGTGT (565 aa). Glutamate 170 contacts Ca(2+). Asparagine 190 is a glycosylation site (N-linked (GlcNAc...) asparagine). Aspartate 226, glutamate 228, aspartate 259, methionine 260, asparagine 261, aspartate 262, and asparagine 263 together coordinate Ca(2+). N-linked (GlcNAc...) asparagine glycosylation is present at asparagine 273. Ca(2+) is bound by residues aspartate 293, aspartate 295, and asparagine 301. N-linked (GlcNAc...) asparagine glycosylation is present at asparagine 325. Residue aspartate 353 coordinates Ca(2+). 5 N-linked (GlcNAc...) asparagine glycosylation sites follow: asparagine 402, asparagine 572, asparagine 622, asparagine 651, and asparagine 692. Residues 725–745 traverse the membrane as a helical segment; it reads IIAILLCIIILLILVLMFVVW. At 746–906 the chain is on the cytoplasmic side; that stretch reads MKRRDKERQA…LADMYGGGDD (161 aa). Residues 863-880 show a composition bias toward low complexity; the sequence is SGSTAGSLSSLNSSSSGG. The segment at 863 to 883 is disordered; sequence SGSTAGSLSSLNSSSSGGDQD.

Homodimer (via extracellular region). Can also form heterodimers with other cadherins (via extracellular region). Dimerization occurs in trans, i.e. with a cadherin chain from another cell. Interacts with PCDH8; this complex may also include TAOK2. The interaction with PCDH8 may lead to internalization through TAOK2/p38 MAPK pathway. Identified in a complex containing FGFR4, NCAM1, CDH2, PLCG1, FRS2, SRC, SHC1, GAP43 and CTTN. May interact with OBSCN (via protein kinase domain 2). Interacts with FBXO45. Cleaved by MMP24. Ectodomain cleavage leads to the generation of a soluble 90 kDa N-terminal soluble fragment and a 45 kDa membrane-bound C-terminal fragment 1 (CTF1), which is further cleaved by gamma-secretase into a 35 kDa. Cleavage in neural stem cells by MMP24 affects CDH2-mediated anchorage of neural stem cells to ependymocytes in the adult subependymal zone, leading to modulate neural stem cell quiescence. In terms of processing, may be phosphorylated by OBSCN. In testis, expressed in Sertoli and germ cells.

Its subcellular location is the cell membrane. The protein resides in the sarcolemma. It localises to the cell junction. The protein localises to the cell surface. It is found in the desmosome. Its subcellular location is the adherens junction. Its function is as follows. Calcium-dependent cell adhesion protein; preferentially mediates homotypic cell-cell adhesion by dimerization with a CDH2 chain from another cell. Cadherins may thus contribute to the sorting of heterogeneous cell types. Acts as a regulator of neural stem cells quiescence by mediating anchorage of neural stem cells to ependymocytes in the adult subependymal zone: upon cleavage by MMP24, CDH2-mediated anchorage is affected, leading to modulate neural stem cell quiescence. Plays a role in cell-to-cell junction formation between pancreatic beta cells and neural crest stem (NCS) cells, promoting the formation of processes by NCS cells. Required for proper neurite branching. Required for pre- and postsynaptic organization. CDH2 may be involved in neuronal recognition mechanism. In hippocampal neurons, may regulate dendritic spine density. The polypeptide is Cadherin-2 (Cdh2) (Rattus norvegicus (Rat)).